Here is a 121-residue protein sequence, read N- to C-terminus: Basic phospholipase A2 BmjeTX-II (121 aa).

Intrachain disulfides connect Cys-26–Cys-114, Cys-28–Cys-45, Cys-44–Cys-95, Cys-50–Cys-121, Cys-51–Cys-88, Cys-58–Cys-82, and Cys-76–Cys-86. Ca(2+) contacts are provided by Tyr-27, Gly-29, and Gly-31. His-48 is a catalytic residue. Asp-49 contacts Ca(2+). Asp-89 is a catalytic residue.

Requires Ca(2+) as cofactor. In terms of tissue distribution, expressed by the venom gland.

It is found in the secreted. The catalysed reaction is a 1,2-diacyl-sn-glycero-3-phosphocholine + H2O = a 1-acyl-sn-glycero-3-phosphocholine + a fatty acid + H(+). Functionally, snake venom phospholipase A2 (PLA2) that induces blockade of neuromuscular contraction in an indirectly stimulated chick biventer cervicis nerve-muscle preparation. Does not inhibit contraction of chick biventer cervicic nerve-muscle preparation in response to treatment with acetylcholine or KCl. The neuromuscular blockade is mediated by inhibitory action at the presynaptic motor nerve endings. Lyses skeletal myoblasts and myotubes in vitro, and intramuscular injection causes local muscle necrosis. Induces edema in the mouse foot pad. Induces a transient increase of IL-6 levels. PLA2 catalyzes the calcium-dependent hydrolysis of the 2-acyl groups in 3-sn-phosphoglycerides. This chain is Basic phospholipase A2 BmjeTX-II, found in Bothrops marajoensis (Marajo lancehead).